Here is a 982-residue protein sequence, read N- to C-terminus: MANSMNGRNPGGRGGNPRKGRILGIIDAIQDAVGPPKQAAADRRTVEKTWKLMDKVVRLCQNPKLQLKNSPPYILDILPDTYQHLRLILSKYDDNQKLAQLSENEYFKIYIDSLMKKSKRAIRLFKEGKERMYEEQSQDRRNLTKLSLIFSHMLAEIKAIFPNGQFQGDNFRITKADAAEFWRKFFGDKTIVPWKVFRQCLHEVHQISSGLEAMALKSTIDLTCNDYISVFEFDIFTRLFQPWGSILRNWNFLAVTHPGYMAFLTYDEVKARLQKYSTKPGSYIFRLSCTRLGQWAIGYVTGDGNILQTIPHNKPLFQALIDGSREGFYLYPDGRSYNPDLTGLCEPTPHDHIKVTQEQYELYCEMGSTFQLCKICAENDKDVKIEPCGHLMCTSCLTAWQESDGQGCPFCRCEIKGTEPIIVDPFDPRDEGSRCCSIIDPFSIPMLDLDDDDDREESLMMNRLASVRKCTDRQNSPVTSPGSSPLAQRRKPQPDPLQIPHLSLPPVPPRLDLIQKGIVRSPCGSPTGSPKSSPCMVRKQDKPLPAPPPPLRDPPPPPERPPPIPPDNRLSRHFHHGESVPSRDQPMPLEAWCPRDAFGTNQVMGCRILGDGSPKPGVTANSSLNGRHSRMGSEQVLMRKHRRHDLPSEGAKVFSNGHLATEEYDVPPRLSPPPPVTTLLPSIKCTGPLANCLSEKTRDTVEDDDDEYKIPSSHPVSLNSQPSHCHNVKAPVRSCDNGHCILNGTHGAPSEMKKSNIPDLGIYLKGGGSDSASDPVPLPPARPPPRDSPKHGSSVNRTPSDYDLLIPPLGEDAFDALPPSLPPPPPPARHSLIEHSKPPGSSSRPSSGQDLFLLPSDPFFDPTSGQVPLPPARRAAGDSGKANRASQDYDQLPSSSDGSQAPARPPKPRPRRTAPEIHHRKPHGPEAALENVDAKIAKLMGEGYAFEEVKRALEIAQNNVEVARSILREFAFPPPVSPRLNL.

The 4H stretch occupies residues proline 35 to glutamine 167. In terms of domain architecture, Cbl-PTB spans proline 35 to glycine 343. Residues glycine 168–phenylalanine 240 are EF-hand-like. Residues aspartate 221, threonine 223, asparagine 225, tyrosine 227, and glutamate 232 each coordinate Ca(2+). An SH2-like region spans residues glutamine 241–glycine 343. Residue serine 282 is modified to Phosphoserine; by PKC/PRKCQ. Arginine 286 serves as a coordination point for 4-O-phospho-L-tyrosine. Residues leucine 344–leucine 372 form a linker region. Tyrosine 363 carries the phosphotyrosine modification. Residues cysteine 373 to arginine 412 form an RING-type zinc finger. Residues alanine 465–proline 588 are disordered. Polar residues predominate over residues arginine 473–leucine 486. Serine 476, serine 480, serine 484, serine 521, serine 525, and serine 529 each carry phosphoserine. The interval proline 543–aspartate 567 is interaction with VAV1. Residues leucine 544 to proline 566 show a composition bias toward pro residues. Serine 633 bears the Phosphoserine mark. Phosphotyrosine occurs at positions 664 and 708. 2 disordered regions span residues glutamate 702 to serine 723 and threonine 745 to leucine 929. The segment covering histidine 714–serine 723 has biased composition (polar residues). Residues proline 819 to alanine 828 are compositionally biased toward pro residues. Positions proline 838–glycine 848 are enriched in low complexity. Residues arginine 884–serine 899 are compositionally biased toward polar residues. Tyrosine 889 is subject to Phosphotyrosine. An interaction with SH3KBP1 region spans residues glutamine 891–alanine 927. The span at proline 906–proline 922 shows a compositional bias: basic residues. The UBA domain occupies asparagine 931 to phenylalanine 970.

As to quaternary structure, interacts with SH3 domain-containing proteins LCK, CRK and SORBS1. Interacts with LCP2 and ZAP70. Interacts with CBL. Interacts with SH3 domain-containing proteins VAV1, FYN, FGR, PLCG1, GRB2, CRKL, PIK3R1 and SH3KBP1/CIN85. Identified in heterotrimeric complexes with SH3KBP1/CIN85, CD2AP and ARHGEF7, where one CBLB peptide binds two copies of the other protein. Interacts with poly-ubiquitinated proteins. Dimerization is required for the binding of poly-ubiquitin, but not for the binding of mono-ubiquitin. Interacts with EGFR (phosphorylated). Interacts with IFT20. Phosphorylated on tyrosine and serine residues upon TCR or BCR activation. Phosphorylated on Tyr-664 and Tyr-708 in adipocytes following insulin stimulation. In terms of processing, auto-ubiquitinated upon EGF-mediated cell activation or upon T-cell costimulation by CD28; which promotes proteasomal degradation.

Its subcellular location is the cytoplasm. It carries out the reaction S-ubiquitinyl-[E2 ubiquitin-conjugating enzyme]-L-cysteine + [acceptor protein]-L-lysine = [E2 ubiquitin-conjugating enzyme]-L-cysteine + N(6)-ubiquitinyl-[acceptor protein]-L-lysine.. It functions in the pathway protein modification; protein ubiquitination. Functionally, E3 ubiquitin-protein ligase which accepts ubiquitin from specific E2 ubiquitin-conjugating enzymes, and transfers it to substrates, generally promoting their degradation by the proteasome. Negatively regulates TCR (T-cell receptor), BCR (B-cell receptor) and FCER1 (high affinity immunoglobulin epsilon receptor) signal transduction pathways. In naive T-cells, inhibits VAV1 activation upon TCR engagement and imposes a requirement for CD28 costimulation for proliferation and IL-2 production. Also acts by promoting PIK3R1/p85 ubiquitination, which impairs its recruitment to the TCR and subsequent activation. In activated T-cells, inhibits PLCG1 activation and calcium mobilization upon restimulation and promotes anergy. In B-cells, acts by ubiquitinating SYK and promoting its proteasomal degradation. Slightly promotes SRC ubiquitination. May be involved in EGFR ubiquitination and internalization. May be functionally coupled with the E2 ubiquitin-protein ligase UB2D3. In association with CBL, required for proper feedback inhibition of ciliary platelet-derived growth factor receptor-alpha (PDGFRA) signaling pathway via ubiquitination and internalization of PDGFRA. This chain is E3 ubiquitin-protein ligase CBL-B (Cblb), found in Mus musculus (Mouse).